Reading from the N-terminus, the 478-residue chain is Alpha-1,3-mannosyl-glycoprotein 4-beta-N-acetylglucosaminyltransferase C (478 aa).

At 1 to 23 (MFKFHQMKHIFEILDKMRCLRKR) the chain is on the cytoplasmic side. Residues 24 to 44 (STVSFLGVLVIFLLFMNLYIE) traverse the membrane as a helical; Signal-anchor for type II membrane protein segment. Residues 45-478 (DSYVLEGDKQ…IIRSISIWTS (434 aa)) lie on the Lumenal side of the membrane. N-linked (GlcNAc...) asparagine glycans are attached at residues asparagine 84 and asparagine 215.

It belongs to the glycosyltransferase 54 family. It depends on a divalent metal cation as a cofactor.

The protein localises to the golgi apparatus membrane. It catalyses the reaction N(4)-{beta-D-GlcNAc-(1-&gt;2)-alpha-D-Man-(1-&gt;3)-[beta-D-GlcNAc-(1-&gt;2)-alpha-D-Man-(1-&gt;6)]-beta-D-Man-(1-&gt;4)-beta-D-GlcNAc-(1-&gt;4)-beta-D-GlcNAc}-L-asparaginyl-[protein] + UDP-N-acetyl-alpha-D-glucosamine = N(4)-{beta-D-GlcNAc-(1-&gt;2)-[beta-D-GlcNAc-(1-&gt;4)]-alpha-D-Man-(1-&gt;3)-[beta-D-GlcNAc-(1-&gt;2)-alpha-D-Man-(1-&gt;6)]-beta-D-Man-(1-&gt;4)-beta-D-GlcNAc-(1-&gt;4)-beta-D-GlcNAc}-L-asparaginyl-[protein] + UDP + H(+). It functions in the pathway protein modification; protein glycosylation. Glycosyltransferase that participates in the transfer of N-acetylglucosamine (GlcNAc) to the core mannose residues of N-linked glycans. Catalyzes the formation of the GlcNAcbeta1-4 branch on the GlcNAcbeta1-2Manalpha1-3 arm of the core structure of N-linked glycans. Essential for the production of tri- and tetra-antennary N-linked sugar chains. Does not catalyze the transfer of GlcNAc to the Manalpha1-6 arm to form GlcNAcBeta1-4Manalpha1-6 linkage ('GnT-VI' activity). This is Alpha-1,3-mannosyl-glycoprotein 4-beta-N-acetylglucosaminyltransferase C (MGAT4C) from Macaca fascicularis (Crab-eating macaque).